We begin with the raw amino-acid sequence, 396 residues long: Protein NDRG1-B (396 aa).

Residues R326–C396 are disordered. A compositionally biased stretch (low complexity) spans S327 to G340. 4 consecutive repeat copies span residues G340 to E349, G350 to D359, G360 to D369, and G370 to T379. Residues G340 to T379 are 4 X 10 AA tandem repeats of G-[NS]-R-S-R-[AS]-[HQ]-T-[DGN]-[DET]. Basic and acidic residues predominate over residues H366–T377. The segment covering D378–K390 has biased composition (polar residues).

The protein belongs to the NDRG family.

Its function is as follows. May be involved in pronephros development, after specification of the pronephros. In Xenopus laevis (African clawed frog), this protein is Protein NDRG1-B (ndrg1-b).